Reading from the N-terminus, the 351-residue chain is Cardiolipin synthase (CMP-forming) (351 aa).

A disordered region spans residues 74–120 (PAPQLSASHQHQAQQQQQQTKQPQQPYDPQQDQVPSTSTASSSKPAA). Over residues 76-120 (PQLSASHQHQAQQQQQQTKQPQQPYDPQQDQVPSTSTASSSKPAA) the composition is skewed to low complexity. A run of 5 helical transmembrane segments spans residues 139 to 159 (PLIG…ALAV), 191 to 211 (VLIG…GWVA), 251 to 271 (AAAA…GGGG), 280 to 300 (PLLI…GYLL), and 321 to 341 (LIMG…LAYG).

Belongs to the CDP-alcohol phosphatidyltransferase class-I family. Mn(2+) serves as cofactor.

It is found in the mitochondrion inner membrane. The enzyme catalyses a CDP-1,2-diacyl-sn-glycerol + a 1,2-diacyl-sn-glycero-3-phospho-(1'-sn-glycerol) = a cardiolipin + CMP + H(+). Catalyzes the synthesis of cardiolipin (CL) (diphosphatidylglycerol) by specifically transferring a phosphatidyl group from CDP-diacylglycerol to phosphatidylglycerol (PG). CL is a key phospholipid in mitochondrial membranes and plays important roles in maintaining the functional integrity and dynamics of mitochondria under both optimal and stress conditions. Cannot catalyze the phosphatidyl group transfer from one PG molecule to another to form CL. This is Cardiolipin synthase (CMP-forming) from Chlamydomonas reinhardtii (Chlamydomonas smithii).